The primary structure comprises 872 residues: Cilia- and flagella-associated protein 58 (872 aa).

2 coiled-coil regions span residues 106–595 (VDSA…ADGE) and 642–839 (ESQY…QKNK).

This sequence belongs to the CFAP58 family. In terms of assembly, interacts with ODFP2.

Its subcellular location is the cell projection. The protein localises to the cilium. The protein resides in the flagellum. It is found in the cytoplasm. It localises to the cytoskeleton. Its subcellular location is the microtubule organizing center. The protein localises to the centrosome. Functionally, has an essential role in the assembly and organization of the sperm flagellar axoneme. Required for the elongation of the primary cilium and sperm flagellar midpiece via modulation of the Notch signaling pathway. The sequence is that of Cilia- and flagella-associated protein 58 from Homo sapiens (Human).